Reading from the N-terminus, the 378-residue chain is MKLKEVTEGKVRIFVPDPKEYMIEGKFDPSWAPVFYNPKMTFNRDLSVIVVSLLKPKIILDALSATGIRGIRYYVESWKSEQLILNDKNSTAASLIQINVKNNGIENAKIFNKDANALLYEIKSEYIDIDPFGSPVPFILSSINATIRNGIAAFTATDLSPLEGSSRTSCRRKYDAINYKLSSSKELGLRILIGKIIREAATLEKTVHPLFSFYADYYYRLFVIVESGARKADENINKNLKYFGECPRCGFQTFVDENCKTKCPICGENFIIIGPLYIGPLHNMEFLKRMIDTYSDFNYLSSFNRIQKLLNVIEKEAKYKSVFYNISKLASKLKVSAIPPIDSILECLGDASKTHFAPTGIRTDKGYEEIIRCVKSLR.

A Trm1 methyltransferase domain is found at 4 to 374 (KEVTEGKVRI…KGYEEIIRCV (371 aa)). Residues Arg-44, Arg-69, Asp-87, Asp-114, and Ala-115 each coordinate S-adenosyl-L-methionine. Zn(2+) contacts are provided by Cys-246, Cys-249, Cys-263, and Cys-266.

The protein belongs to the class I-like SAM-binding methyltransferase superfamily. Trm1 family.

The catalysed reaction is guanosine(26) in tRNA + 2 S-adenosyl-L-methionine = N(2)-dimethylguanosine(26) in tRNA + 2 S-adenosyl-L-homocysteine + 2 H(+). In terms of biological role, dimethylates a single guanine residue at position 26 of a number of tRNAs using S-adenosyl-L-methionine as donor of the methyl groups. The sequence is that of tRNA (guanine(26)-N(2))-dimethyltransferase from Saccharolobus islandicus (strain M.16.27) (Sulfolobus islandicus).